The chain runs to 552 residues: Cation/acetate symporter ActP (552 aa).

The next 14 membrane-spanning stretches (helical) occupy residues 5–25 (FMML…DALT), 35–55 (IQAI…TYWA), 78–98 (GLAI…SALV), 105–125 (GLIY…LIAE), 151–171 (LSAC…MVGA), 185–205 (VAVI…GMLA), 208–228 (WVQI…AVMV), 264–284 (ISAL…PHIL), 305–325 (GFMG…ILLV), 357–377 (FFLG…VAGL), 407–427 (VSKI…ILFE), 431–451 (IAFM…PIII), 466–486 (IGGW…PTIW), and 499–519 (YDYP…FFSI).

Belongs to the sodium:solute symporter (SSF) (TC 2.A.21) family.

The protein localises to the cell inner membrane. Its function is as follows. Transports acetate. This Pectobacterium carotovorum subsp. carotovorum (strain PC1) protein is Cation/acetate symporter ActP.